Here is a 692-residue protein sequence, read N- to C-terminus: MANSQRKILVTSALPYANGPIHLGHMLEYIQTDIWSRFQKLRGHECHYICADDAHGTPIMLKAQQLGIEPEEMIAQVNKEHQQDFADFNIKFDNFHSTHSVENRELSGEIYLKLRDAGFIKTRTISQLFDPEKSMFLPDRFVKGTCPKCKSEDQYGDNCDNCGATYNPTDLIDPKSAVSGATPVMKDSEHFFFDLPAFENMLSEWTRSGAIQDEIANKLAEWFEQGLQQWDISRDAPYFGFEIPDAPGKYFYVWLDAPIGYMGSFKNLCDRREDLNFDDFWSKDSTAEVYHFIGKDIVNFHSLFWPAMLEGAGYRKPTSVFAHGYVTVNGAKMSKSKGTFIKARTYLDNLDPEYLRYYYAAKLSNRIDDLDLNLEDFAQRVNSDLVGKLVNLASRTAGFISKRFDGKLAKIADTTLEETFLAKQEVIADLYENREFGKAMREIMALADIANAYVADAAPWQLIKDEAKQDEAHQVCSNALNLFRILVTYLKPVLPKLADDVEAFLQFPLTWDNLGADLAGHEIAKFKALMQRIDMKNIEAIIEASKDNLQATTEAAPEKKAKKSAETADVAVDTRSPLESDPISDEISFDDFAKLDLRIARIAKAEHVPEANKLLKLQLDLGGETKQVFAGIKSAYAPEDLEGKLTVMVANLAPRKMRFGMSEGMVLAAGPGNKDLWILEPHEGAQPGMRVK.

Residues Pro15–His25 carry the 'HIGH' region motif. Zn(2+) contacts are provided by Cys146, Cys149, Cys159, and Cys162. Positions Lys332 to Ser336 match the 'KMSKS' region motif. An ATP-binding site is contributed by Lys335. Residues Thr552 to Pro577 form a disordered region. Positions Ala556–Glu566 are enriched in basic and acidic residues. Residues Asp591–Lys692 enclose the tRNA-binding domain.

The protein belongs to the class-I aminoacyl-tRNA synthetase family. MetG type 1 subfamily. As to quaternary structure, homodimer. Zn(2+) serves as cofactor.

The protein localises to the cytoplasm. It carries out the reaction tRNA(Met) + L-methionine + ATP = L-methionyl-tRNA(Met) + AMP + diphosphate. Functionally, is required not only for elongation of protein synthesis but also for the initiation of all mRNA translation through initiator tRNA(fMet) aminoacylation. This chain is Methionine--tRNA ligase, found in Shewanella sediminis (strain HAW-EB3).